The chain runs to 216 residues: Gas vesicle protein H (216 aa).

The interval 1 to 141 (MSPNLNGPGG…IHIETRETDD (141 aa)) is disordered. The span at 15–25 (DRPDEPDDSDR) shows a compositional bias: acidic residues. Basic and acidic residues-rich tracts occupy residues 38–51 (PDDRPNKTPDRPSD), 73–84 (DGHRQGHGRIDR), and 107–141 (KPSDEPRVEAPRTEGTDSQPEGEKSIHIETRETDD).

It belongs to the gas vesicle GvpH family. GvpF to GvpM interact with each other in vitro, and may form multi-subunit complex(es). Interacts with GvpC. Might interact with GvpA.

The protein resides in the gas vesicle. Proteins GvpF to GvpM might be involved in nucleating gas vesicle formation. A minor component of the gas vesicle. Gas vesicles are hollow, gas filled proteinaceous nanostructures found in some microorganisms. They allow positioning of halobacteria at the optimal depth for growth in the poorly aerated, shallow brine pools of their habitat. Functionally, expression of a 9.5 kb mc-vac DNA fragment containing 2 divergently transcribed regions (gvpD-gvpE-gvpF-gvpG-gvpH-gvpI-gvpJ-gvpK-gvpL-gvpM and gvpA-gvpC-gvpN-gvpO) allows H.volcanii to produce gas vesicles. The chain is Gas vesicle protein H from Haloferax mediterranei (strain ATCC 33500 / DSM 1411 / JCM 8866 / NBRC 14739 / NCIMB 2177 / R-4) (Halobacterium mediterranei).